Consider the following 661-residue polypeptide: Junctophilin-1 (661 aa).

Over 1–639 the chain is Cytoplasmic; the sequence is MTGGRFDFDD…EKEANSGPNS (639 aa). 5 MORN repeats span residues 14–36, 38–59, 60–82, 106–128, and 129–151; these read YCGGWEEGKAHGHGICTGPKGQG, YSGSWSHGFEVVGGYTWPSGNT, YQGYWAQGKRHGLGVETKGKWMY, YEGTWSNGLQDGYGVETYGDGGT, and YQGQWAGGMRHGYGVRQSVPYGM. Phosphoserine occurs at positions 157, 216, and 220. Residues 228–247 form a disordered region; the sequence is SKSSISSKRSSVRSDAAMSR. MORN repeat units follow at residues 281-303 and 304-326; these read YMGEWKNDKRNGFGVSERSNGMK and YEGEWANNKRHGYGCTVFPDGSK. The segment covering 433–454 has biased composition (basic and acidic residues); it reads DAKENPEEKVPEKPPTPKESPH. Positions 433-631 are disordered; that stretch reads DAKENPEEKV…SNDSCPALEK (199 aa). Thr448 carries the post-translational modification Phosphothreonine. Position 452 is a phosphoserine (Ser452). Phosphothreonine is present on Thr461. Residues Ser465, Ser469, and Ser475 each carry the phosphoserine modification. Residues 599-613 are compositionally biased toward basic and acidic residues; the sequence is VAKESKAEPKAKKSE. Residues 640–660 traverse the membrane as a helical; Anchor for type IV membrane protein segment; it reads IMIVLVMLLNIGLAILFVHFL.

This sequence belongs to the junctophilin family. In terms of tissue distribution, abundantly expressed in skeletal muscle. Very low levels in heart.

It is found in the cell membrane. The protein localises to the endoplasmic reticulum membrane. It localises to the sarcoplasmic reticulum membrane. Its function is as follows. Junctophilins contribute to the formation of junctional membrane complexes (JMCs) which link the plasma membrane with the endoplasmic or sarcoplasmic reticulum in excitable cells. Provides a structural foundation for functional cross-talk between the cell surface and intracellular calcium release channels. JPH1 contributes to the construction of the skeletal muscle triad by linking the t-tubule (transverse-tubule) and SR (sarcoplasmic reticulum) membranes. The sequence is that of Junctophilin-1 (JPH1) from Homo sapiens (Human).